The chain runs to 206 residues: High frequency lysogenization protein HflD homolog (206 aa).

The protein belongs to the HflD family.

It localises to the cytoplasm. It is found in the cell inner membrane. This is High frequency lysogenization protein HflD homolog from Marinobacter nauticus (strain ATCC 700491 / DSM 11845 / VT8) (Marinobacter aquaeolei).